We begin with the raw amino-acid sequence, 200 residues long: dITP/XTP pyrophosphatase (200 aa).

8–13 (TRNAGK) provides a ligand contact to substrate. The Proton acceptor role is filled by Asp-72. Residue Asp-72 participates in Mg(2+) binding. Residues Ser-73, 155–158 (FGYD), Lys-178, and 183–184 (HR) each bind substrate.

It belongs to the HAM1 NTPase family. In terms of assembly, homodimer. The cofactor is Mg(2+).

The enzyme catalyses XTP + H2O = XMP + diphosphate + H(+). The catalysed reaction is dITP + H2O = dIMP + diphosphate + H(+). It carries out the reaction ITP + H2O = IMP + diphosphate + H(+). Pyrophosphatase that catalyzes the hydrolysis of nucleoside triphosphates to their monophosphate derivatives, with a high preference for the non-canonical purine nucleotides XTP (xanthosine triphosphate), dITP (deoxyinosine triphosphate) and ITP. Seems to function as a house-cleaning enzyme that removes non-canonical purine nucleotides from the nucleotide pool, thus preventing their incorporation into DNA/RNA and avoiding chromosomal lesions. The protein is dITP/XTP pyrophosphatase of Streptomyces avermitilis (strain ATCC 31267 / DSM 46492 / JCM 5070 / NBRC 14893 / NCIMB 12804 / NRRL 8165 / MA-4680).